We begin with the raw amino-acid sequence, 333 residues long: Isoaspartyl peptidase/L-asparaginase (333 aa).

Residue T191 is the Nucleophile of the active site. Residues 219-222 (RVGD) and 242-245 (TGHG) contribute to the substrate site.

This sequence belongs to the Ntn-hydrolase family. Heterodimer of an alpha and beta chain produced by autocleavage. This heterodimer may then dimerize in turn, giving rise to a heterotetramer. Cleaved into an alpha and beta chain by autocatalysis; this activates the enzyme. The N-terminal residue of the beta subunit is responsible for the nucleophile hydrolase activity. As to expression, present in testis, brain, liver, kidney, heart and skeletal muscle. In brain, specifically present in the astrocytic lineage. Present in sperm (at protein level).

The protein resides in the cytoplasm. The enzyme catalyses L-asparagine + H2O = L-aspartate + NH4(+). It catalyses the reaction Cleavage of a beta-linked Asp residue from the N-terminus of a polypeptide.. In terms of biological role, has both L-asparaginase and beta-aspartyl peptidase activity. Is highly active with L-Asp beta-methyl ester. Besides, has catalytic activity toward beta-aspartyl dipeptides and their methyl esters, including beta-L-Asp-L-Phe, beta-L-Asp-L-Phe methyl ester (aspartame), beta-L-Asp-L-Ala, beta-L-Asp-L-Leu and beta-L-Asp-L-Lys. Does not have aspartylglucosaminidase activity and is inactive toward GlcNAc-L-Asn. Likewise, has no activity toward glutamine. May be involved in the production of L-aspartate, which can act as an excitatory neurotransmitter in some brain regions. The polypeptide is Isoaspartyl peptidase/L-asparaginase (Asrgl1) (Rattus norvegicus (Rat)).